The following is a 185-amino-acid chain: ATP synthase subunit b 2 (185 aa).

The interval 1-23 (MAEGHGDAKGATAHTAADGGHKA) is disordered. Residues 9-18 (KGATAHTAAD) are compositionally biased toward low complexity. The helical transmembrane segment at 32–51 (TFASQLVSLTIAFVALYLIV) threads the bilayer.

The protein belongs to the ATPase B chain family. As to quaternary structure, F-type ATPases have 2 components, F(1) - the catalytic core - and F(0) - the membrane proton channel. F(1) has five subunits: alpha(3), beta(3), gamma(1), delta(1), epsilon(1). F(0) has three main subunits: a(1), b(2) and c(10-14). The alpha and beta chains form an alternating ring which encloses part of the gamma chain. F(1) is attached to F(0) by a central stalk formed by the gamma and epsilon chains, while a peripheral stalk is formed by the delta and b chains.

It is found in the cell inner membrane. In terms of biological role, f(1)F(0) ATP synthase produces ATP from ADP in the presence of a proton or sodium gradient. F-type ATPases consist of two structural domains, F(1) containing the extramembraneous catalytic core and F(0) containing the membrane proton channel, linked together by a central stalk and a peripheral stalk. During catalysis, ATP synthesis in the catalytic domain of F(1) is coupled via a rotary mechanism of the central stalk subunits to proton translocation. Its function is as follows. Component of the F(0) channel, it forms part of the peripheral stalk, linking F(1) to F(0). The b'-subunit is a diverged and duplicated form of b found in plants and photosynthetic bacteria. This chain is ATP synthase subunit b 2 (atpF2), found in Rhodopseudomonas palustris (strain HaA2).